Consider the following 863-residue polypeptide: Probable beta-glucosidase A (863 aa).

Residues 1–19 form the signal peptide; sequence MKLGWLEAAALTAASVASA. N-linked (GlcNAc...) asparagine glycosylation is found at Asn65, Asn214, and Asn255. Asp283 is an active-site residue. N-linked (GlcNAc...) asparagine glycans are attached at residues Asn318, Asn325, Asn357, Asn493, Asn526, Asn545, Asn567, Asn664, and Asn715. A disordered region spans residues 720-754; that stretch reads KESSGDPNYGWDDEDYIPEGAKDGSPQDVLPSGGG.

Belongs to the glycosyl hydrolase 3 family.

The protein localises to the secreted. It catalyses the reaction Hydrolysis of terminal, non-reducing beta-D-glucosyl residues with release of beta-D-glucose.. The protein operates within glycan metabolism; cellulose degradation. Beta-glucosidases are one of a number of cellulolytic enzymes involved in the degradation of cellulosic biomass. Catalyzes the last step releasing glucose from the inhibitory cellobiose. This chain is Probable beta-glucosidase A (bglA), found in Emericella nidulans (strain FGSC A4 / ATCC 38163 / CBS 112.46 / NRRL 194 / M139) (Aspergillus nidulans).